Here is a 199-residue protein sequence, read N- to C-terminus: Translation initiation factor IF-3 (199 aa).

Belongs to the IF-3 family. In terms of assembly, monomer.

It localises to the cytoplasm. Functionally, IF-3 binds to the 30S ribosomal subunit and shifts the equilibrium between 70S ribosomes and their 50S and 30S subunits in favor of the free subunits, thus enhancing the availability of 30S subunits on which protein synthesis initiation begins. The protein is Translation initiation factor IF-3 of Mycoplasmopsis pulmonis (strain UAB CTIP) (Mycoplasma pulmonis).